The following is a 245-amino-acid chain: Chromosome partition protein MukE (245 aa).

A disordered region spans residues 213-245; sequence PESIAAEKATADDESAVSNEEDFEYDDNQEGAE. Residues 224-245 show a composition bias toward acidic residues; it reads DDESAVSNEEDFEYDDNQEGAE.

The protein belongs to the MukE family. Interacts, and probably forms a ternary complex, with MukF and MukB. The complex formation is stimulated by calcium or magnesium.

It is found in the cytoplasm. It localises to the nucleoid. Involved in chromosome condensation, segregation and cell cycle progression. May participate in facilitating chromosome segregation by condensation DNA from both sides of a centrally located replisome during cell division. Probably acts via its interaction with MukB and MukF. In Actinobacillus succinogenes (strain ATCC 55618 / DSM 22257 / CCUG 43843 / 130Z), this protein is Chromosome partition protein MukE.